The chain runs to 240 residues: Aliphatic sulfonates import ATP-binding protein SsuB 2 (240 aa).

One can recognise an ABC transporter domain in the interval 2 to 218 (VRTRELRRGF…RHSAPEFIHA (217 aa)). 34–41 (GRSGSGKS) contributes to the ATP binding site.

This sequence belongs to the ABC transporter superfamily. Aliphatic sulfonates importer (TC 3.A.1.17.2) family. The complex is composed of two ATP-binding proteins (SsuB), two transmembrane proteins (SsuC) and a solute-binding protein (SsuA).

The protein localises to the cell membrane. It catalyses the reaction ATP + H2O + aliphatic sulfonate-[sulfonate-binding protein]Side 1 = ADP + phosphate + aliphatic sulfonateSide 2 + [sulfonate-binding protein]Side 1.. Its function is as follows. Part of the ABC transporter complex SsuABC involved in aliphatic sulfonates import. Responsible for energy coupling to the transport system. In Nocardia farcinica (strain IFM 10152), this protein is Aliphatic sulfonates import ATP-binding protein SsuB 2.